The following is a 114-amino-acid chain: Aspartate 1-decarboxylase (114 aa).

Ser-25 functions as the Schiff-base intermediate with substrate; via pyruvic acid in the catalytic mechanism. Ser-25 is modified (pyruvic acid (Ser)). Thr-57 serves as a coordination point for substrate. Tyr-58 functions as the Proton donor in the catalytic mechanism. 73 to 75 (GAA) serves as a coordination point for substrate.

Belongs to the PanD family. As to quaternary structure, heterooctamer of four alpha and four beta subunits. Pyruvate is required as a cofactor. In terms of processing, is synthesized initially as an inactive proenzyme, which is activated by self-cleavage at a specific serine bond to produce a beta-subunit with a hydroxyl group at its C-terminus and an alpha-subunit with a pyruvoyl group at its N-terminus.

The protein resides in the cytoplasm. It carries out the reaction L-aspartate + H(+) = beta-alanine + CO2. The protein operates within cofactor biosynthesis; (R)-pantothenate biosynthesis; beta-alanine from L-aspartate: step 1/1. Catalyzes the pyruvoyl-dependent decarboxylation of aspartate to produce beta-alanine. This chain is Aspartate 1-decarboxylase, found in Thermotoga petrophila (strain ATCC BAA-488 / DSM 13995 / JCM 10881 / RKU-1).